The chain runs to 371 residues: Cytochrome b (371 aa).

The next 4 helical transmembrane spans lie at 32 to 52 (VGFSLGFFICMQIICGVCLAW), 76 to 98 (FVIRSTHICFTSLLFFLLYVHIF), 113 to 133 (VWAVGFIIYIFIVVIGFIGYV), and 179 to 199 (LHVLHVLLPFVLILVIFMHLF). His-82 and His-96 together coordinate heme b. Residues His-183 and His-197 each contribute to the heme b site. Residue His-202 participates in a ubiquinone binding. 4 helical membrane passes run 227–247 (FYLRDMFLAFLILFYVVYFIF), 296–316 (LMVILLFSLFLFILNCILWFV), 329–349 (LILFYSIFMSGFLALYVILAY), and 350–370 (PIWMELQFWVLLLFMLVVCRL).

The protein belongs to the cytochrome b family. In terms of assembly, the main subunits of complex b-c1 are: cytochrome b, cytochrome c1 and the Rieske protein. Heme b serves as cofactor.

Its subcellular location is the mitochondrion inner membrane. Functionally, component of the ubiquinol-cytochrome c reductase complex (complex III or cytochrome b-c1 complex) that is part of the mitochondrial respiratory chain. The b-c1 complex mediates electron transfer from ubiquinol to cytochrome c. Contributes to the generation of a proton gradient across the mitochondrial membrane that is then used for ATP synthesis. The polypeptide is Cytochrome b (MT-CYB) (Leishmania tarentolae (Sauroleishmania tarentolae)).